Consider the following 451-residue polypeptide: Interferon regulatory factor 4 (451 aa).

The IRF tryptophan pentad repeat DNA-binding region spans 21 to 129 (NGKLRQWLID…DPYKVYRIVP (109 aa)). A phosphoserine; by ROCK2 mark is found at Ser447 and Ser448.

It belongs to the IRF family. In terms of assembly, interacts with the BATF-JUNB heterodimer. Interacts with BATF (via bZIP domain); the interaction is direct. Interacts with SPIB. Interacts with DEF6. Directly interacts with NLRP3 in the nucleus of Th2 cells; this interaction enhances IRF4 ability to bind to the IL4 promoter and is required for optimal IRF4-dependent IL4 transcription. Interacts with SPI1. In terms of processing, phosphorylation by ROCK2 regulates IL-17 and IL-21 production. As to expression, lymphoid cells.

The protein localises to the nucleus. Its subcellular location is the cytoplasm. Its function is as follows. Transcriptional activator. Binds to the interferon-stimulated response element (ISRE) of the MHC class I promoter. Binds the immunoglobulin lambda light chain enhancer, together with PU.1. Probably plays a role in ISRE-targeted signal transduction mechanisms specific to lymphoid cells. Involved in CD8(+) dendritic cell differentiation by forming a complex with the BATF-JUNB heterodimer in immune cells, leading to recognition of AICE sequence (5'-TGAnTCA/GAAA-3'), an immune-specific regulatory element, followed by cooperative binding of BATF and IRF4 and activation of genes. This Homo sapiens (Human) protein is Interferon regulatory factor 4.